We begin with the raw amino-acid sequence, 140 residues long: Ribosome maturation factor RimP (140 aa).

Belongs to the RimP family.

The protein resides in the cytoplasm. Required for maturation of 30S ribosomal subunits. The polypeptide is Ribosome maturation factor RimP (Campylobacter lari (strain RM2100 / D67 / ATCC BAA-1060)).